The sequence spans 769 residues: Transferrin receptor protein 1 (769 aa).

The Cytoplasmic portion of the chain corresponds to 1 to 70 (MMDQARSAFS…KPKRFNGFIC (70 aa)). The mediates interaction with SH3BP4 stretch occupies residues 1–70 (MMDQARSAFS…KPKRFNGFIC (70 aa)). Serine 10 and serine 19 each carry phosphoserine. Tyrosine 20 is subject to Phosphotyrosine. Residues 20–23 (YTRF) carry the Endocytosis signal motif. The residue at position 21 (threonine 21) is a Phosphothreonine. At serine 24 the chain carries Phosphoserine. The Stop-transfer sequence motif lies at 61–64 (KPKR). The S-palmitoyl cysteine moiety is linked to residue cysteine 70. Residues 71–91 (YGTIAIILFFLIGFMIGYLGY) traverse the membrane as a helical; Signal-anchor for type II membrane protein segment. The Extracellular portion of the chain corresponds to 92–769 (CKRVEAKSEC…GDIWDIDNEF (678 aa)). O-linked (GalNAc...) threonine glycosylation is present at threonine 107. A PA domain is found at 232–322 (SKAATVTGRL…GTGDPYTPGF (91 aa)). 2 N-linked (GlcNAc...) asparagine glycosylation sites follow: asparagine 260 and asparagine 326. Residues 578 to 769 (TMDVYEKLIQ…GDIWDIDNEF (192 aa)) form a ligand-binding region. The short motif at 655–657 (RGD) is the Cell attachment site element. Residues asparagine 731 and asparagine 736 are each glycosylated (N-linked (GlcNAc...) asparagine).

The protein belongs to the peptidase M28 family. M28B subfamily. Homodimer; disulfide-linked. Binds one transferrin molecule per subunit. Interacts with SH3BP4. Homodimer; disulfide-linked. Binds one transferrin or HFE molecule per subunit. Binds the HLA class II histocompatibility antigen, DR1. Interacts with SH3BP3. Interacts with STEAP3; facilitates TFRC endocytosis in erythroid precursor cells. In terms of processing, stearoylated by ZDHHC6 which inhibits TFRC-mediated activation of the JNK pathway and promotes mitochondrial fragmentation. Stearoylation does not affect iron uptake. N- and O-glycosylated, phosphorylated and palmitoylated.

It is found in the cell membrane. It localises to the melanosome. Functionally, cellular uptake of iron occurs via receptor-mediated endocytosis of ligand-occupied transferrin receptor into specialized endosomes. Endosomal acidification leads to iron release. The apotransferrin-receptor complex is then recycled to the cell surface with a return to neutral pH and the concomitant loss of affinity of apotransferrin for its receptor. Transferrin receptor is necessary for development of erythrocytes and the nervous system. Positively regulates T and B cell proliferation through iron uptake. Acts as a lipid sensor that regulates mitochondrial fusion by regulating activation of the JNK pathway. When dietary levels of stearate (C18:0) are low, promotes activation of the JNK pathway, resulting in HUWE1-mediated ubiquitination and subsequent degradation of the mitofusin MFN2 and inhibition of mitochondrial fusion. When dietary levels of stearate (C18:0) are high, TFRC stearoylation inhibits activation of the JNK pathway and thus degradation of the mitofusin MFN2. Mediates uptake of NICOL1 into fibroblasts where it may regulate extracellular matrix production. The protein is Transferrin receptor protein 1 (TFRC) of Felis catus (Cat).